A 470-amino-acid chain; its full sequence is Neuronal acetylcholine receptor subunit beta-4 (470 aa).

The first 3 residues, 1 to 3 (STA), serve as a signal peptide directing secretion. The Extracellular portion of the chain corresponds to 4-216 (ADAEEKLMNH…IIKRKPLFYT (213 aa)). N-linked (GlcNAc...) asparagine glycosylation is found at Asn29, Asn118, and Asn146. Residues Cys133 and Cys147 are joined by a disulfide bond. The chain crosses the membrane as a helical span at residues 217 to 237 (INLIIPCVLITSLAILVFYLP). Residues 238-245 (SDCGEKMT) are Cytoplasmic-facing. Glu242 serves as a coordination point for Na(+). Residues 246–266 (LCISVLLALTVFLLLISKIVP) traverse the membrane as a helical segment. The Extracellular portion of the chain corresponds to 267–278 (PTSLDVPLIGKY). The helical transmembrane segment at 279–299 (LMFTMVLVTFSIVTSVCVLNV) threads the bilayer. Topologically, residues 300–438 (HHRSPSTHTM…WKYVAMVVDR (139 aa)) are cytoplasmic. The chain crosses the membrane as a helical span at residues 439 to 459 (LFLWIFVLVCVLGTVGLFLQP). The Extracellular segment spans residues 460–470 (LFQNHIAATNP).

Belongs to the ligand-gated ion channel (TC 1.A.9) family. Acetylcholine receptor (TC 1.A.9.1) subfamily. Beta-4/CHRNB4 sub-subfamily. In terms of assembly, neuronal AChR is composed of two different types of subunits: alpha and beta. CHRNB4/Beta-4 subunit can be combined to CHRNA2/alpha-2, CHRNA3/alpha-3 or CHRNA4/alpha-4, CHRNA5/alpha-5 and CHRNB3/beta-3 to give rise to functional receptors.

It localises to the synaptic cell membrane. It is found in the cell membrane. It carries out the reaction Ca(2+)(in) = Ca(2+)(out). It catalyses the reaction K(+)(in) = K(+)(out). The catalysed reaction is Na(+)(in) = Na(+)(out). Its activity is regulated as follows. Activated by a myriad of ligands such as acetylcholine, cytisine, nicotine, choline and epibatidine. The heteropentamer CHRNA3:CHRNB4 activity is blocked by the alpha-conotoxin ImI and AuIB. Functionally, component of neuronal acetylcholine receptors (nAChRs) that function as pentameric, ligand-gated cation channels with high calcium permeability among other activities. nAChRs are excitatory neurotrasnmitter receptors formed by a collection of nAChR subunits known to mediate synaptic transmission in the nervous system and the neuromuscular junction. Each nAchR subunit confers differential attributes to channel properties, including activation, deactivation and desensitization kinetics, pH sensitivity, cation permeability, and binding to allosteric modulators. CHRNB4 forms heteropentameric neuronal acetylcholine receptors with CHRNA2, CHRNA3 and CHRNA4, as well as CHRNA5 and CHRNB3 as accesory subunits. CHRNA3:CHRNB4 being predominant in neurons of the autonomic ganglia, it is known as ganglionic nicotinic receptor. CHRNA3:CHRNB4 or CHRNA3:CHRNA5:CHRNB4 play also an important role in the habenulo-interpeduncular tract, modulating the mesolimbic dopamine system and affecting reward circuits and addiction. Hypothalamic CHRNA3:CHRNB4 nAChR activation by nicotine leads to activation of POMC neurons and a decrease in food intake. This is Neuronal acetylcholine receptor subunit beta-4 (CHRNB4) from Gallus gallus (Chicken).